The chain runs to 523 residues: ATP-dependent RNA helicase DBP3 (523 aa).

The span at 1–21 shows a compositional bias: basic and acidic residues; the sequence is MTKEEIADKKRKVVDEEVIEK. The tract at residues 1 to 71 is disordered; it reads MTKEEIADKK…SEKKPEPTSA (71 aa). Residues 22 to 48 show a composition bias toward basic residues; that stretch reads KKSKKHKKDKKDKKEKKDKKHKKHKKE. The span at 49 to 67 shows a compositional bias: basic and acidic residues; that stretch reads KKGEKEVEVPEKESEKKPE. The short motif at 114–140 is the Q motif element; that stretch reads LSFDYLSLDSSIQAEISKFPKPTPIQA. The Helicase ATP-binding domain occupies 143-315; it reads WPYLLSGKDV…STFMNNPIKV (173 aa). Residue 156 to 163 coordinates ATP; that stretch reads AETGSGKT. The DEAD box motif lies at 262–265; it reads DEAD. The Helicase C-terminal domain maps to 344 to 493; the sequence is KLLELLKKYH…PVPEDLIKFG (150 aa).

It belongs to the DEAD box helicase family. DDX5/DBP2 subfamily.

Its subcellular location is the nucleus. It is found in the nucleolus. The enzyme catalyses ATP + H2O = ADP + phosphate + H(+). In terms of biological role, ATP-dependent RNA helicase required for 60S ribosomal subunit synthesis. Involved in efficient pre-rRNA processing, predominantly at site A3, which is necessary for the normal formation of 25S and 5.8S rRNAs. In Saccharomyces cerevisiae (strain ATCC 204508 / S288c) (Baker's yeast), this protein is ATP-dependent RNA helicase DBP3 (DBP3).